The sequence spans 1384 residues: DNA-directed RNA polymerase subunit beta (1384 aa).

This sequence belongs to the RNA polymerase beta chain family. The RNAP catalytic core consists of 2 alpha, 1 beta, 1 beta' and 1 omega subunit. When a sigma factor is associated with the core the holoenzyme is formed, which can initiate transcription.

The catalysed reaction is RNA(n) + a ribonucleoside 5'-triphosphate = RNA(n+1) + diphosphate. Its function is as follows. DNA-dependent RNA polymerase catalyzes the transcription of DNA into RNA using the four ribonucleoside triphosphates as substrates. The polypeptide is DNA-directed RNA polymerase subunit beta (Stenotrophomonas maltophilia (strain R551-3)).